Reading from the N-terminus, the 197-residue chain is Peptidyl-tRNA hydrolase (197 aa).

Tyrosine 17 contributes to the tRNA binding site. The active-site Proton acceptor is histidine 22. TRNA-binding residues include phenylalanine 68, asparagine 70, and asparagine 116.

It belongs to the PTH family. Monomer.

It is found in the cytoplasm. The catalysed reaction is an N-acyl-L-alpha-aminoacyl-tRNA + H2O = an N-acyl-L-amino acid + a tRNA + H(+). Functionally, hydrolyzes ribosome-free peptidyl-tRNAs (with 1 or more amino acids incorporated), which drop off the ribosome during protein synthesis, or as a result of ribosome stalling. Catalyzes the release of premature peptidyl moieties from peptidyl-tRNA molecules trapped in stalled 50S ribosomal subunits, and thus maintains levels of free tRNAs and 50S ribosomes. In Yersinia enterocolitica serotype O:8 / biotype 1B (strain NCTC 13174 / 8081), this protein is Peptidyl-tRNA hydrolase.